The following is a 1803-amino-acid chain: Transposon Ty4-J Gag-Pol polyprotein (1803 aa).

Residues 39-115 are a coiled coil; that stretch reads RKVSIKDEQV…IQLLETNENN (77 aa). A ty4 protease region spans residues 382-502; the sequence is NNHLSPVQNE…KTKMVLSRKY (121 aa). The For protease activity; shared with dimeric partner role is filled by aspartate 415. Residues 540 to 600 form an integrase-type zinc finger-like region; it reads AIKPTSSPGF…EPNEFWCQTC (61 aa). The 168-residue stretch at 620-787 folds into the Integrase catalytic domain; sequence TDHEPGSSWC…LPLKAISRQP (168 aa). Mg(2+) contacts are provided by aspartate 631 and aspartate 696. Residues 1224-1250 are disordered; the sequence is KRKRKRHDKNNSLTSYELERDKKRSKK. Residues 1376-1511 enclose the Reverse transcriptase Ty1/copia-type domain; that stretch reads RNMFMKTLDI…DILGMDLVYN (136 aa). Mg(2+) is bound by residues aspartate 1384, aspartate 1463, aspartate 1464, aspartate 1645, glutamate 1687, and aspartate 1721. An RNase H Ty1/copia-type domain is found at 1645-1791; it reads DASVGSEYDA…KRFIQVLKNK (147 aa).

The protease is a homodimer, whose active site consists of two apposed aspartic acid residues. Post-translationally, proteolytically processed into capsid protein (CA), Ty4 protease (PR), integrase (IN) and reverse transcriptase/ribonuclease H (RT) proteins. Initially, virus-like particles (VLPs) are composed of the structural unprocessed proteins Gag and Gag-Pol, and also contain the host initiator methionine tRNA (tRNA(i)-Met) which serves as a primer for minus-strand DNA synthesis, and a dimer of genomic Ty RNA. Processing of the polyproteins occurs within the particle and proceeds by an ordered pathway, called maturation. First, the protease (PR) is released by autocatalytic cleavage of the Gag-Pol polyprotein, and this cleavage is a prerequisite for subsequent processing at the remaining sites to release the mature structural and catalytic proteins. Maturation takes place prior to the RT reaction and is required to produce transposition-competent VLPs.

It is found in the cytoplasm. The protein resides in the nucleus. The catalysed reaction is DNA(n) + a 2'-deoxyribonucleoside 5'-triphosphate = DNA(n+1) + diphosphate. It catalyses the reaction Endonucleolytic cleavage to 5'-phosphomonoester.. Its function is as follows. Capsid protein (CA) is the structural component of the virus-like particle (VLP), forming the shell that encapsulates the retrotransposons dimeric RNA genome. In terms of biological role, the aspartyl protease (PR) mediates the proteolytic cleavages of the Gag and Gag-Pol polyproteins after assembly of the VLP. Functionally, reverse transcriptase/ribonuclease H (RT) is a multifunctional enzyme that catalyzes the conversion of the retro-elements RNA genome into dsDNA within the VLP. The enzyme displays a DNA polymerase activity that can copy either DNA or RNA templates, and a ribonuclease H (RNase H) activity that cleaves the RNA strand of RNA-DNA heteroduplexes during plus-strand synthesis and hydrolyzes RNA primers. The conversion leads to a linear dsDNA copy of the retrotransposon that includes long terminal repeats (LTRs) at both ends. Integrase (IN) targets the VLP to the nucleus, where a subparticle preintegration complex (PIC) containing at least integrase and the newly synthesized dsDNA copy of the retrotransposon must transit the nuclear membrane. Once in the nucleus, integrase performs the integration of the dsDNA into the host genome. The sequence is that of Transposon Ty4-J Gag-Pol polyprotein (TY4B-J) from Saccharomyces cerevisiae (strain ATCC 204508 / S288c) (Baker's yeast).